The sequence spans 160 residues: SsrA-binding protein (160 aa).

This sequence belongs to the SmpB family.

Its subcellular location is the cytoplasm. Its function is as follows. Required for rescue of stalled ribosomes mediated by trans-translation. Binds to transfer-messenger RNA (tmRNA), required for stable association of tmRNA with ribosomes. tmRNA and SmpB together mimic tRNA shape, replacing the anticodon stem-loop with SmpB. tmRNA is encoded by the ssrA gene; the 2 termini fold to resemble tRNA(Ala) and it encodes a 'tag peptide', a short internal open reading frame. During trans-translation Ala-aminoacylated tmRNA acts like a tRNA, entering the A-site of stalled ribosomes, displacing the stalled mRNA. The ribosome then switches to translate the ORF on the tmRNA; the nascent peptide is terminated with the 'tag peptide' encoded by the tmRNA and targeted for degradation. The ribosome is freed to recommence translation, which seems to be the essential function of trans-translation. The sequence is that of SsrA-binding protein from Klebsiella pneumoniae (strain 342).